The sequence spans 188 residues: Nicotinamide-nucleotide adenylyltransferase (188 aa).

The protein belongs to the archaeal NMN adenylyltransferase family.

It localises to the cytoplasm. The enzyme catalyses beta-nicotinamide D-ribonucleotide + ATP + H(+) = diphosphate + NAD(+). The protein operates within cofactor biosynthesis; NAD(+) biosynthesis; NAD(+) from nicotinamide D-ribonucleotide: step 1/1. The polypeptide is Nicotinamide-nucleotide adenylyltransferase (Thermococcus kodakarensis (strain ATCC BAA-918 / JCM 12380 / KOD1) (Pyrococcus kodakaraensis (strain KOD1))).